The primary structure comprises 447 residues: Argininosuccinate synthase (447 aa).

ATP is bound by residues 17 to 25 (AFSGGLDTS) and A43. Y99 is an L-citrulline binding site. Positions 129 and 131 each coordinate ATP. L-aspartate is bound by residues T131, N135, and D136. L-citrulline is bound at residue N135. D136 contributes to the ATP binding site. The L-citrulline site is built by R139 and S192. D194 is an ATP binding site. T201, E203, and E280 together coordinate L-citrulline.

This sequence belongs to the argininosuccinate synthase family. Type 2 subfamily. In terms of assembly, homotetramer.

The protein resides in the cytoplasm. The catalysed reaction is L-citrulline + L-aspartate + ATP = 2-(N(omega)-L-arginino)succinate + AMP + diphosphate + H(+). It functions in the pathway amino-acid biosynthesis; L-arginine biosynthesis; L-arginine from L-ornithine and carbamoyl phosphate: step 2/3. In Escherichia coli O127:H6 (strain E2348/69 / EPEC), this protein is Argininosuccinate synthase.